A 345-amino-acid chain; its full sequence is Dihydroorotase (345 aa).

Positions 14 and 16 each coordinate Zn(2+). Substrate contacts are provided by residues His16–Arg18 and Asn42. Zn(2+) is bound by residues Lys100, His137, and His175. Lys100 is modified (N6-carboxylysine). Residue His137 participates in substrate binding. Residue Leu220 coordinates substrate. A Zn(2+)-binding site is contributed by Asp248. Residue Asp248 is part of the active site. His252 and Ala264 together coordinate substrate.

This sequence belongs to the metallo-dependent hydrolases superfamily. DHOase family. Class II DHOase subfamily. As to quaternary structure, homodimer. The cofactor is Zn(2+).

It catalyses the reaction (S)-dihydroorotate + H2O = N-carbamoyl-L-aspartate + H(+). Its pathway is pyrimidine metabolism; UMP biosynthesis via de novo pathway; (S)-dihydroorotate from bicarbonate: step 3/3. Functionally, catalyzes the reversible cyclization of carbamoyl aspartate to dihydroorotate. The protein is Dihydroorotase of Methylobacillus flagellatus (strain ATCC 51484 / DSM 6875 / VKM B-1610 / KT).